A 430-amino-acid chain; its full sequence is Tol-Pal system protein TolB (430 aa).

Residues 1-21 form the signal peptide; sequence MKQAFRLMVGLLVLWASVLHA.

It belongs to the TolB family. As to quaternary structure, the Tol-Pal system is composed of five core proteins: the inner membrane proteins TolA, TolQ and TolR, the periplasmic protein TolB and the outer membrane protein Pal. They form a network linking the inner and outer membranes and the peptidoglycan layer.

The protein resides in the periplasm. Functionally, part of the Tol-Pal system, which plays a role in outer membrane invagination during cell division and is important for maintaining outer membrane integrity. TolB occupies a key intermediary position in the Tol-Pal system because it communicates directly with both membrane-embedded components, Pal in the outer membrane and TolA in the inner membrane. This Edwardsiella ictaluri (strain 93-146) protein is Tol-Pal system protein TolB.